We begin with the raw amino-acid sequence, 372 residues long: Cyclin-A3-2 (372 aa).

Positions 53–73 (NQKKETQKPKRNLKPPPAKQI) are disordered.

Belongs to the cyclin family. Cyclin AB subfamily.

This is Cyclin-A3-2 (CYCA3-2) from Arabidopsis thaliana (Mouse-ear cress).